The chain runs to 1036 residues: UDP-N-acetylglucosamine--peptide N-acetylglucosaminyltransferase 110 kDa subunit (1036 aa).

Position 2 is an N-acetylalanine (alanine 2). Residues serine 3 and serine 4 each carry the phosphoserine; by GSK3-beta; alternate modification. O-linked (GlcNAc) serine; alternate glycans are attached at residues serine 3 and serine 4. 12 TPR repeats span residues 11 to 44 (STGL…EPDN), 79 to 112 (AEAY…KPDF), 113 to 146 (IDGY…NPDL), 147 to 180 (YCVR…QPNF), 181 to 214 (AVAW…DPNF), 215 to 248 (LDAY…SPNH), 249 to 282 (AVVH…QPHF), 283 to 316 (PDAY…CPTH), 317 to 350 (ADSL…FPEF), 351 to 384 (AAAH…SPTF), 385 to 418 (ADAY…NPAF), and 419 to 452 (ADAH…KPDF). O-linked (GlcNAc) serine; by autocatalysis glycosylation is present at serine 389. A Phosphothreonine modification is found at threonine 444. Residues 453-463 (PDAYCNLAHCL) form a TPR 13; truncated repeat. A DFP motif motif is present at residues 454-456 (DAY). The short motif at 478 to 493 (KLVSIVAEQLEKNRLP) is the Nuclear localization signal element. Histidine 498 functions as the Proton acceptor in the catalytic mechanism. Residues glutamine 839, lysine 842, 896-898 (APK), 901-904 (HVRR), 920-922 (HTT), and aspartate 925 each bind UDP. Tyrosine 979 carries the post-translational modification Phosphotyrosine. The required for phosphatidylinositol 3,4,5-triphosphate binding stretch occupies residues 981-1000 (KKIRGKVWKQRISSPLFNTK).

This sequence belongs to the glycosyltransferase 41 family. O-GlcNAc transferase subfamily. As to quaternary structure, monomer; may exist in different oligomerization states in cells. Homotrimer, oligomerizes via TPR repeats 6 and 7. Trimerization is not necessary for activity in vitro, however it increases affinity for UDP-GlcNAc. A heterotrimer consisting of two 110 kDa subunits and one highly related 78 kDa subunit is isolated from liver. Component of a THAP1/THAP3-HCFC1-OGT complex. Component of the NSL complex at least composed of MOF/KAT8, KANSL1, KANSL2, KANSL3, MCRS1, PHF20, OGT1/OGT, WDR5 and HCFC1. Found in a complex with KIF5B, RHOT1, RHOT2 and TRAK1. Found in a complex composed of at least SINHCAF, SIN3A, HDAC1, SAP30, RBBP4, OGT and TET1. Component of a complex composed of KMT2E/MLL5, OGT and USP7; the complex stabilizes KMT2E/MLL5, preventing KMT2E/MLL5 ubiquitination and proteasomal-mediated degradation. Interacts (via TPRs 1-6) with SIN3A; the interaction mediates transcriptional repression in parallel with histone deacetylase. Interacts (via TPR 5-6) with TET1, TET2 and TET3. Interacts (via TPR repeats 6 and 7) with ATXN10. Interacts with NSD2. Interacts with PROSER1; this interaction mediates TET2 O-GlcNAcylation and stability by promoting the interaction between OGT and TET2. Post-translationally, several different immunologically-related forms of this protein are found in different tissues (with apparent molecular weights of 110, 80 and 78 kDa); they are probably the result of alternative splicing and/or proteolysis. In terms of processing, O-glycosylated; contains O-GlcNAc. Both p110 and p78 forms are O-glycosylated. Ubiquitinated by the SCF(FBXO31) complex, leading to its proteasomal degradation. Post-translationally, phosphorylation on Ser-3 or Ser-4 by GSK3-beta positively regulates its activity. Phosphorylation at Thr-444 by AMPK promotes nuclear localization. In terms of processing, glycosylated via autocatalysis; O-GlcNAcylation at Ser-389 promotes nuclear localization. Expressed in brain, heart, liver, thymus, muscle, lung, spleen, uterus and ovary; in the kidney only an immunologically-related 78 kDa band is present, which is also present in liver and muscle. In the pancreas, expressed in both exocrine acinar cells and in endocrine cells of the islets of Langerhans.

It localises to the cytoplasm. Its subcellular location is the nucleus. The protein localises to the cell membrane. It is found in the mitochondrion membrane. The protein resides in the cell projection. It catalyses the reaction L-seryl-[protein] + UDP-N-acetyl-alpha-D-glucosamine = 3-O-(N-acetyl-beta-D-glucosaminyl)-L-seryl-[protein] + UDP + H(+). The enzyme catalyses L-threonyl-[protein] + UDP-N-acetyl-alpha-D-glucosamine = 3-O-(N-acetyl-beta-D-glucosaminyl)-L-threonyl-[protein] + UDP + H(+). The protein operates within protein modification; protein glycosylation. Inhibited by UDP, UTP and UDP-GlcNAc; 50 mM NaCl or KCl inhibit activity about 70%. Catalyzes the transfer of a single N-acetylglucosamine from UDP-GlcNAc to a serine or threonine residue in cytoplasmic and nuclear proteins resulting in their modification with a beta-linked N-acetylglucosamine (O-GlcNAc). Glycosylates a large and diverse number of proteins including histone H2B, AKT1, AMPK, ATG4B, CAPRIN1, EZH2, FNIP1, GSDMD, KRT7, LMNA, LMNB1, LMNB2, RPTOR, HOXA1, PFKL, KMT2E/MLL5, MAPT/TAU, TET2, RBL2, RET, NOD2 and HCFC1. Can regulate their cellular processes via cross-talk between glycosylation and phosphorylation or by affecting proteolytic processing. Involved in insulin resistance in muscle and adipocyte cells via glycosylating insulin signaling components and inhibiting the 'Thr-308' phosphorylation of AKT1, enhancing IRS1 phosphorylation and attenuating insulin signaling. Involved in glycolysis regulation by mediating glycosylation of 6-phosphofructokinase PFKL, inhibiting its activity. Plays a key role in chromatin structure by mediating O-GlcNAcylation of 'Ser-112' of histone H2B: recruited to CpG-rich transcription start sites of active genes via its interaction with TET proteins (TET1, TET2 or TET3). As part of the NSL complex indirectly involved in acetylation of nucleosomal histone H4 on several lysine residues. O-GlcNAcylation of 'Ser-75' of EZH2 increases its stability, and facilitating the formation of H3K27me3 by the PRC2/EED-EZH2 complex. Stabilizes KMT2E/MLL5 by mediating its glycosylation, thereby preventing KMT2E/MLL5 ubiquitination. Regulates circadian oscillation of the clock genes and glucose homeostasis in the liver. Stabilizes clock proteins BMAL1 and CLOCK through O-glycosylation, which prevents their ubiquitination and subsequent degradation. Promotes the CLOCK-BMAL1-mediated transcription of genes in the negative loop of the circadian clock such as PER1/2 and CRY1/2. O-glycosylates HCFC1 and regulates its proteolytic processing and transcriptional activity. Component of a THAP1/THAP3-HCFC1-OGT complex that is required for the regulation of the transcriptional activity of RRM1. Regulates mitochondrial motility in neurons by mediating glycosylation of TRAK1. Promotes autophagy by mediating O-glycosylation of ATG4B. Acts as a regulator of mTORC1 signaling by mediating O-glycosylation of RPTOR and FNIP1: O-GlcNAcylation of RPTOR in response to glucose sufficiency promotes activation of the mTORC1 complex. This chain is UDP-N-acetylglucosamine--peptide N-acetylglucosaminyltransferase 110 kDa subunit (Ogt), found in Rattus norvegicus (Rat).